Here is a 428-residue protein sequence, read N- to C-terminus: 3-phosphoshikimate 1-carboxyvinyltransferase (428 aa).

3-phosphoshikimate contacts are provided by lysine 21, serine 22, and arginine 26. Residue lysine 21 participates in phosphoenolpyruvate binding. Positions 91 and 119 each coordinate phosphoenolpyruvate. 3-phosphoshikimate contacts are provided by serine 164, glutamine 166, aspartate 313, and lysine 340. Glutamine 166 is a phosphoenolpyruvate binding site. Residue aspartate 313 is the Proton acceptor of the active site. Phosphoenolpyruvate-binding residues include arginine 344 and arginine 386.

This sequence belongs to the EPSP synthase family. As to quaternary structure, monomer.

It is found in the cytoplasm. It carries out the reaction 3-phosphoshikimate + phosphoenolpyruvate = 5-O-(1-carboxyvinyl)-3-phosphoshikimate + phosphate. It participates in metabolic intermediate biosynthesis; chorismate biosynthesis; chorismate from D-erythrose 4-phosphate and phosphoenolpyruvate: step 6/7. Its function is as follows. Catalyzes the transfer of the enolpyruvyl moiety of phosphoenolpyruvate (PEP) to the 5-hydroxyl of shikimate-3-phosphate (S3P) to produce enolpyruvyl shikimate-3-phosphate and inorganic phosphate. This Campylobacter jejuni subsp. doylei (strain ATCC BAA-1458 / RM4099 / 269.97) protein is 3-phosphoshikimate 1-carboxyvinyltransferase.